The chain runs to 247 residues: uncharacterized protein (247 aa).

This is an uncharacterized protein from Saccharomyces cerevisiae (strain ATCC 204508 / S288c) (Baker's yeast).